The following is a 174-amino-acid chain: Secretory-abundant heat soluble protein 68234 (174 aa).

An N-terminal signal peptide occupies residues 1–19 (MARFLVALALFGVVAMTAA). An SAHS-c1 region spans residues 26–57 (EWSGKPWLGKFVAEVTDKSENWEAFVDALGLP). The tract at residues 72 to 100 (YKQGDHYHHIFALPDKNFEKDIEFTLGQE) is SAHS-c2. The segment at 113–162 (KYSEDGEKLVADVSIPTKGKTIRSEYEVQGDQLIKTYKTGDIVAKKWFKK) is SAHS-c3.

Belongs to the Secretory-abundant heat soluble protein (SAHS) family.

The protein localises to the secreted. Its function is as follows. Secreted heat soluble protein acting as a molecular shield in water-deficient condition. Tardigrade-specific intrinsically disordered proteins (TDPs) are essential for desiccation tolerance by forming non-crystalline amorphous solids upon desiccation, and this vitrified state mirrors their protective capabilities. The chain is Secretory-abundant heat soluble protein 68234 from Hypsibius exemplaris (Freshwater tardigrade).